Reading from the N-terminus, the 304-residue chain is Mas-related G-protein coupled receptor member A (304 aa).

Topologically, residues 1-17 (MDKTIPGSFNSRTLIPN) are extracellular. Residues 18–38 (LLIIISGLVGLIGNAMVFWLL) traverse the membrane as a helical segment. Residues 39–46 (GFRLARNA) lie on the Cytoplasmic side of the membrane. A helical transmembrane segment spans residues 47–67 (FSVYILNLALADFLFLLCHII). The Extracellular portion of the chain corresponds to 68 to 80 (DSTLLLLKFSYPN). A helical membrane pass occupies residues 81–101 (IIFLPCFNTVMMVPYIAGLSM). The Cytoplasmic segment spans residues 102–132 (LSAISTERCLSVVCPIWYRCRRPKHTSTVMC). The chain crosses the membrane as a helical span at residues 133–153 (SAIWVLSLLICILNRYFCGFL). Residues 154–167 (DTKYEKDNRCLASN) are Extracellular-facing. The helical transmembrane segment at 168–188 (FFTAACLIFLFVVLCLSSLAL) threads the bilayer. Residues 189–211 (LVRLFCGAGRMKLTRLYATIMLT) are Cytoplasmic-facing. Residues 212 to 232 (VLVFLLCGLPFGIHWFLLIWI) traverse the membrane as a helical segment. Over 233 to 244 (KIDYGKFAYGLY) the chain is Extracellular. The chain crosses the membrane as a helical span at residues 245 to 265 (LAALVLTAVNSCANPIIYFFV). The Cytoplasmic segment spans residues 266–304 (GSFRHQKHQTLKMVLQRALQDTPETAENTVEMSSSKVEP).

It belongs to the G-protein coupled receptor 1 family. Mas subfamily. Expressed in a subset of IB4-positive small diameter nociceptive dorsal root neurons.

Its subcellular location is the cell membrane. Its function is as follows. Orphan receptor activated by a subset of RFamide-family neuropeptides such as FLRF-amide and FMRF-amide. Mediates its action by association with G proteins that activate a phosphatidylinositol-calcium second messenger system. Its effect is mediated by G(q) and G(11) proteins. May regulate the function of nociceptive neurons by modulation of pain perception. This is Mas-related G-protein coupled receptor member A (Mrgpra) from Rattus norvegicus (Rat).